A 522-amino-acid chain; its full sequence is UPF0288 protein MTH_1865 (522 aa).

It belongs to the UPF0288 family.

This Methanothermobacter thermautotrophicus (strain ATCC 29096 / DSM 1053 / JCM 10044 / NBRC 100330 / Delta H) (Methanobacterium thermoautotrophicum) protein is UPF0288 protein MTH_1865.